Consider the following 277-residue polypeptide: Knob-associated histidine-rich protein (277 aa).

Disordered stretches follow at residues 95 to 114 and 162 to 277; these read DGSHGNLRGHDNKGSEGYGY and SSVN…KKKK. Basic and acidic residues-rich tracts occupy residues 169–190 and 211–220; these read KHGDEKHHSSKKHEGNDGEGEK and KDNEDAESVK. Over residues 221–237 the composition is skewed to basic residues; it reads SKKHKSHDCEKKKSKKH. Basic and acidic residues-rich tracts occupy residues 238–259 and 268–277; these read KDNEDAESVKSKKSVKEKGEKH and KTNEEKKKKK.

The protein resides in the secreted. KAHRP might mimick human histidine-rich glycoproteins to anchor host thrombospondin or a parasite analog in a binding complex with the endothelial cell receptor. The sequence is that of Knob-associated histidine-rich protein from Plasmodium falciparum (isolate CDC / Honduras).